Reading from the N-terminus, the 586-residue chain is 3-hydroxy-3-methylglutaryl-coenzyme A reductase 3 (586 aa).

2 helical membrane passes run proline 36–valine 59 and alanine 87–valine 107. The interval histidine 108–aspartate 170 is linker. Catalytic stretches follow at residues aspartate 171–phenylalanine 586 and aspartate 172–phenylalanine 586. Catalysis depends on charge relay system residues glutamate 265, lysine 397, and aspartate 473. Catalysis depends on histidine 571, which acts as the Proton donor. Asparagine 575 carries an N-linked (GlcNAc...) asparagine glycan.

It belongs to the HMG-CoA reductase family.

The protein resides in the endoplasmic reticulum membrane. Its subcellular location is the mitochondrion membrane. The protein localises to the plastid membrane. It catalyses the reaction (R)-mevalonate + 2 NADP(+) + CoA = (3S)-3-hydroxy-3-methylglutaryl-CoA + 2 NADPH + 2 H(+). The protein operates within metabolic intermediate biosynthesis; (R)-mevalonate biosynthesis; (R)-mevalonate from acetyl-CoA: step 3/3. In terms of biological role, catalyzes the synthesis of mevalonate. The specific precursor of all isoprenoid compounds present in plants. In Hevea brasiliensis (Para rubber tree), this protein is 3-hydroxy-3-methylglutaryl-coenzyme A reductase 3 (HMGR3).